A 194-amino-acid chain; its full sequence is Putative lipoprotein LppK (194 aa).

A signal peptide spans 1 to 26 (MSRWTHRTFFIALSAIVTTAGFGSSG). Cys27 carries the N-palmitoyl cysteine lipid modification. Cys27 is lipidated: S-diacylglycerol cysteine. Positions 174–194 (GNSSGLTNPAPIKAPTPTPSH) are disordered. Residues 185–194 (IKAPTPTPSH) are compositionally biased toward pro residues.

This sequence belongs to the MTB12 family.

The protein localises to the cell membrane. The polypeptide is Putative lipoprotein LppK (lppK) (Mycobacterium leprae (strain TN)).